A 967-amino-acid chain; its full sequence is Phosphatidylserine decarboxylase proenzyme 3 (967 aa).

Positions 217–255 (FIAEPDSSIPPSESSVSISTDTGKETPPSKSKKSSNQPY) are disordered. Positions 220–237 (EPDSSIPPSESSVSISTD) are enriched in low complexity. In terms of domain architecture, C2 spans 250-373 (SSNQPYVSIG…SSAQVDPETG (124 aa)). Ca(2+)-binding residues include D343, S346, and D349. The segment covering 532-544 (DQQATQTPQSPSS) has biased composition (low complexity). The tract at residues 532-566 (DQQATQTPQSPSSNEESGPGTPTQTSDQYEDSEDS) is disordered. The span at 545-558 (NEESGPGTPTQTSD) shows a compositional bias: polar residues. Active-site charge relay system; for autoendoproteolytic cleavage activity residues include D769, H825, and S912. The Schiff-base intermediate with substrate; via pyruvic acid; for decarboxylase activity role is filled by S912. Pyruvic acid (Ser); by autocatalysis is present on S912. A disordered region spans residues 947–967 (IGQKIDPNKPTDAEDHSKSDS).

This sequence belongs to the phosphatidylserine decarboxylase family. PSD-B subfamily. Eukaryotic type II sub-subfamily. In terms of assembly, heterodimer of a large membrane-associated beta subunit and a small pyruvoyl-containing alpha subunit. Requires pyruvate as cofactor. Ca(2+) is required as a cofactor. In terms of processing, is synthesized initially as an inactive proenzyme. Formation of the active enzyme involves a self-maturation process in which the active site pyruvoyl group is generated from an internal serine residue via an autocatalytic post-translational modification. Two non-identical subunits are generated from the proenzyme in this reaction, and the pyruvate is formed at the N-terminus of the alpha chain, which is derived from the carboxyl end of the proenzyme. The autoendoproteolytic cleavage occurs by a canonical serine protease mechanism, in which the side chain hydroxyl group of the serine supplies its oxygen atom to form the C-terminus of the beta chain, while the remainder of the serine residue undergoes an oxidative deamination to produce ammonia and the pyruvoyl prosthetic group on the alpha chain. During this reaction, the Ser that is part of the protease active site of the proenzyme becomes the pyruvoyl prosthetic group, which constitutes an essential element of the active site of the mature decarboxylase.

It localises to the golgi apparatus membrane. It is found in the endosome membrane. Its subcellular location is the cytoplasm. The enzyme catalyses a 1,2-diacyl-sn-glycero-3-phospho-L-serine + H(+) = a 1,2-diacyl-sn-glycero-3-phosphoethanolamine + CO2. The protein operates within phospholipid metabolism; phosphatidylethanolamine biosynthesis; phosphatidylethanolamine from CDP-diacylglycerol: step 2/2. Functionally, catalyzes the formation of phosphatidylethanolamine (PtdEtn) from phosphatidylserine (PtdSer). Plays a central role in phospholipid metabolism and in the interorganelle trafficking of phosphatidylserine. Together with psd1 and psd2, responsible for the majority of phosphatidylethanolamine synthesis. The sequence is that of Phosphatidylserine decarboxylase proenzyme 3 from Schizosaccharomyces pombe (strain 972 / ATCC 24843) (Fission yeast).